A 775-amino-acid chain; its full sequence is MILDTDYITENGKPVIRVFKKENGEFKIEYDRTFEPYFYALLKDDSAIEDVKKVTAKRHGTVVKVKRAEKVQKKFLGRPIEVWKLYFNHPQDVPAIRDRIRAHPAVVDIYEYDIPFAKRYLIDKGLIPMEGDEELTMLAFDIETLYHEGEEFGTGPILMISYADGSEARVITWKKIDLPYVDVVSTEKEMIKRFLRVVREKDPDVLITYNGDNFDFAYLKKRCEELGIKFTLGRDGSEPKIQRMGDRFAVEVKGRIHFDLYPVIRRTINLPTYTLEAVYEAVFGKPKEKVYAEEIAQAWESGEGLERVARYSMEDAKVTYELGREFFPMEAQLSRLIGQSLWDVSRSSTGNLVEWFLLRKAYKRNELAPNKPDERELARRRGGYAGGYVKEPERGLWDNIVYLDFRSLYPSIIITHNVSPDTLNREGCKEYDVAPEVGHKFCKDFPGFIPSLLGDLLEERQKIKRKMKATVDPLEKKLLDYRQRAIKILANSFYGYYGYAKARWYCKECAESVTAWGREYIEMVIRELEEKFGFKVLYADTDGLHATIPGADAETVKKKAKEFLKYINPKLPGLLELEYEGFYVRGFFVTKKKYAVIDEEGKITTRGLEIVRRDWSEIAKETQARVLEAILKHGDVEEAVRIVKEVTEKLSKYEVPPEKLVIHEQITRDLRDYKATGPHVAVAKRLAARGVKIRPGTVISYIVLKGSGRIGDRAIPADEFDPTKHRYDAEYYIENQVLPAVERILKAFGYRKEDLRYQKTKQVGLGAWLKVKGKK.

Belongs to the DNA polymerase type-B family.

It carries out the reaction DNA(n) + a 2'-deoxyribonucleoside 5'-triphosphate = DNA(n+1) + diphosphate. The chain is DNA polymerase (pol) from Thermococcus sp. (strain 9oN-7).